The following is a 299-amino-acid chain: MAYERFTSAITLLMHWRNRLDPYWKLARGDRPVGFLLLLWPTWWALWLAAGGVPPWWTLCVFTTGIWLTRSAGCVINDYTDRWLDPHVERTRIRPLVTGAVSPRNALLMFATLMLIAFGLVLTMNQLTVLLSVVGLFLAMTYPYLKRYTYLPQVYLGLAFGWGIPMAFAAIQGKVPTQAWLLYVANILWTTAYDTWCAMVDRDDDIKMGAKSTAILFADLDLTVQGVLYTLMLFTLCLVGLRATLSHTYWISLIAAVALIGYQFIIARRREPTACFRAFMHNNWVGMTIFAGIALATTH.

8 consecutive transmembrane segments (helical) span residues 33 to 53 (VGFL…AGGV), 56 to 76 (WWTL…GCVI), 107 to 127 (LLMF…MNQL), 151 to 171 (LPQV…FAAI), 180 to 200 (WLLY…CAMV), 214 to 234 (AILF…LMLF), 247 to 267 (HTYW…FIIA), and 278 to 298 (AFMH…LATT).

It belongs to the UbiA prenyltransferase family. Mg(2+) serves as cofactor.

It localises to the cell inner membrane. It catalyses the reaction all-trans-octaprenyl diphosphate + 4-hydroxybenzoate = 4-hydroxy-3-(all-trans-octaprenyl)benzoate + diphosphate. It functions in the pathway cofactor biosynthesis; ubiquinone biosynthesis. Its function is as follows. Catalyzes the prenylation of para-hydroxybenzoate (PHB) with an all-trans polyprenyl group. Mediates the second step in the final reaction sequence of ubiquinone-8 (UQ-8) biosynthesis, which is the condensation of the polyisoprenoid side chain with PHB, generating the first membrane-bound Q intermediate 3-octaprenyl-4-hydroxybenzoate. This chain is 4-hydroxybenzoate octaprenyltransferase, found in Xylella fastidiosa (strain 9a5c).